A 332-amino-acid chain; its full sequence is Formamidase (332 aa).

The region spanning 14-259 (FLTALIQYPV…WEIVTAEVYP (246 aa)) is the CN hydrolase domain. Glutamate 60 serves as the catalytic Proton acceptor. The active-site Proton donor is the lysine 132. Cysteine 165 serves as the catalytic Nucleophile.

It belongs to the carbon-nitrogen hydrolase superfamily. Aliphatic amidase family.

The enzyme catalyses formamide + H2O = formate + NH4(+). Is an aliphatic amidase with a restricted substrate specificity, as it only hydrolyzes formamide. This Bacillus cereus (strain ZK / E33L) protein is Formamidase.